Here is a 406-residue protein sequence, read N- to C-terminus: NADH-quinone oxidoreductase subunit D (406 aa).

The protein belongs to the complex I 49 kDa subunit family. As to quaternary structure, NDH-1 is composed of 14 different subunits. Subunits NuoB, C, D, E, F, and G constitute the peripheral sector of the complex.

It is found in the cell inner membrane. It carries out the reaction a quinone + NADH + 5 H(+)(in) = a quinol + NAD(+) + 4 H(+)(out). In terms of biological role, NDH-1 shuttles electrons from NADH, via FMN and iron-sulfur (Fe-S) centers, to quinones in the respiratory chain. The immediate electron acceptor for the enzyme in this species is believed to be ubiquinone. Couples the redox reaction to proton translocation (for every two electrons transferred, four hydrogen ions are translocated across the cytoplasmic membrane), and thus conserves the redox energy in a proton gradient. This chain is NADH-quinone oxidoreductase subunit D, found in Rhizorhabdus wittichii (strain DSM 6014 / CCUG 31198 / JCM 15750 / NBRC 105917 / EY 4224 / RW1) (Sphingomonas wittichii).